Consider the following 313-residue polypeptide: Desiccation-related protein PCC13-62 (313 aa).

The first 26 residues, 1–26 (MAQQPTFASAALVSFFLALICSCSYA), serve as a signal peptide directing secretion.

The protein is Desiccation-related protein PCC13-62 of Craterostigma plantagineum (Blue gem).